Consider the following 533-residue polypeptide: MATEHVNGNGTEEPMDTTSAVIHSENFQTLLDAGLPQKVAEKLDEIYVAGQRKYGGPPPDSVYSGQQPSVGTEIFVGKIPRDLFEDELVPLFEKAGPIWDLRLMMDPLTGLNRGYAFVTFCTKEAAQEAVKLYNNHEIRSGKHIGVCISVANNRLFVGSIPKSKTKEQILEEFSKVTEGLTDVILYHQPDDKKKNRGFCFLEYEDHKTAAQARRRLMSGKVKVWGNVGTVEWADPIEDPDPEVMAKVKVLFVRNLANTVTEEILEKSFSQFGKLERVKKLKDYAFIHFDERDGAVKAMEEMNGKDLEGENIEIVFAKPPDQKRKERKAQRQAAKNQMYDDYYYYGPPHMPPPTRGRGRGGRGGYGYPPDYYGYEDYYDYYGYDYHNYRGGYEDPYYGYEDFQVGARGRGGRGARGAAPSRGRGAAPPRGRAGYSQRGGPGSARGVRGARGGAQQQRGRGVRGARGGRGGNVGGKRKADGYNQPDSKRRQTNNQNWGSQPIAQQPLQGGDHSGNYGYKSENEEFYQDTFGQQWK.

At A2 the chain carries N-acetylalanine. S69 carries the post-translational modification Phosphoserine. 3 RRM domains span residues 72-151 (TEIF…ISVA), 153-235 (NRLF…WADP), and 248-318 (KVLF…FAKP). K78 is covalently cross-linked (Glycyl lysine isopeptide (Lys-Gly) (interchain with G-Cter in SUMO2)). N6-acetyllysine is present on K131. K273 carries the post-translational modification N6-acetyllysine. Y283 carries the post-translational modification Phosphotyrosine. Residues 310–471 (NIEIVFAKPP…GARGGRGGNV (162 aa)) are interaction with APOBEC1. At R354 the chain carries Asymmetric dimethylarginine; by PRMT1; alternate. R354 is modified (omega-N-methylarginine; by PRMT1; alternate). 6 repeat units span residues 358–360 (RGG), 361–363 (RGG), 370–374 (YYGYE), 379–382 (YYGY), 388–390 (RGG), and 395–398 (YYGY). The segment at 358 to 469 (RGGRGGYGYP…VRGARGGRGG (112 aa)) is 8 X 3 AA repeats of R-G-G. The segment at 370-398 (YYGYEDYYDYYGYDYHNYRGGYEDPYYGY) is 3 X 4 AA repeats of Y-Y-G-Y. R406 carries the post-translational modification Omega-N-methylarginine; by PRMT1. The disordered stretch occupies residues 407-533 (GRGGRGARGA…YQDTFGQQWK (127 aa)). Residues 408-410 (RGG) form a 1-4 repeat. The segment covering 414-432 (RGAAPSRGRGAAPPRGRAG) has biased composition (low complexity). Residue R420 is modified to Asymmetric dimethylarginine; by PRMT1. Asymmetric dimethylarginine; by PRMT1; alternate is present on R428. Residue R428 is modified to Omega-N-methylarginine; by PRMT1; alternate. The interval 428–459 (RGRAGYSQRGGPGSARGVRGARGGAQQQRGRG) is interaction with SMN. R436 carries the post-translational modification Asymmetric dimethylarginine; alternate. Residue R436 is modified to Omega-N-methylarginine; alternate. The 1-5 repeat unit spans residues 436–438 (RGG). Residues R446 and R449 each carry the asymmetric dimethylarginine; by PRMT1; alternate modification. An omega-N-methylarginine; by PRMT1; alternate mark is found at R446 and R449. 3 tandem repeats follow at residues 449-451 (RGG), 464-466 (RGG), and 467-469 (RGG). Gly residues predominate over residues 460–472 (VRGARGGRGGNVG). Positions 474–488 (KRKADGYNQPDSKRR) match the Bipartite nuclear localization signal motif. A compositionally biased stretch (polar residues) spans 490–505 (TNNQNWGSQPIAQQPL). S497 carries the phosphoserine modification. K517 is covalently cross-linked (Glycyl lysine isopeptide (Lys-Gly) (interchain with G-Cter in SUMO2)).

Identified in a histone pre-mRNA complex, at least composed of ERI1, LSM11, SLBP, SNRPB, SYNCRIP and YBX1. Identified in the spliceosome C complex. Component of the coding region determinant (CRD)-mediated complex, composed of DHX9, HNRNPU, IGF2BP1, SYNCRIP and YBX1. Identified in a mRNP complex, at least composed of DHX9, DDX3X, ELAVL1, HNRNPU, IGF2BP1, ILF3, PABPC1, PCBP2, PTBP2, STAU1, STAU2, SYNCRIP and YBX1. Identified in a mRNP granule complex, at least composed of ACTB, ACTN4, DHX9, ERG, HNRNPA1, HNRNPA2B1, HNRNPAB, HNRNPD, HNRNPL, HNRNPR, HNRNPU, HSPA1, HSPA8, IGF2BP1, ILF2, ILF3, NCBP1, NCL, PABPC1, PABPC4, PABPN1, RPLP0, RPS3, RPS3A, RPS4X, RPS8, RPS9, SYNCRIP, YBX1 and untranslated mRNAs. Component of the APOB mRNA editosome. Interacts with APOBEC1 and A1CF. Part of a complex associated with the FOS mCRD domain and consisting of PABPC1, PAIP1, CSDE1/UNR, HNRPD and SYNCRIP. Interacts with HNRPR, SMN, POLR2A hyperphosphorylated C-terminal domain, minute virus of mice (MVM) NS1 protein and through its C-terminal domain with SYT7, SYT8 and SYT9. The non-phosphorylated and phosphorylated forms are colocalized with PAIP1 in polysomes. Interacts with GTPBP1. Interacts with HABP4. Post-translationally, phosphorylated on tyrosine. The membrane-bound form found in microsomes is phosphorylated in vitro by insulin receptor tyrosine kinase (INSR). Phosphorylation is inhibited upon binding to RNA, whereas the cytoplasmic form is poorly phosphorylated.

It localises to the nucleus. The protein localises to the nucleoplasm. Its subcellular location is the cytoplasm. It is found in the microsome. Its function is as follows. Heterogenous nuclear ribonucleoprotein (hnRNP) implicated in mRNA processing mechanisms. Component of the CRD-mediated complex that promotes MYC mRNA stability. Is associated in vitro with pre-mRNA, splicing intermediates and mature mRNA protein complexes. Binds to apoB mRNA AU-rich sequences. Part of the APOB mRNA editosome complex and may modulate the postranscriptional C to U RNA-editing of the APOB mRNA through either by binding to A1CF (APOBEC1 complementation factor), to APOBEC1 or to RNA itself. May be involved in translationally coupled mRNA turnover. Implicated with other RNA-binding proteins in the cytoplasmic deadenylation/translational and decay interplay of the FOS mRNA mediated by the major coding-region determinant of instability (mCRD) domain. Interacts in vitro preferentially with poly(A) and poly(U) RNA sequences. May be involved in cytoplasmic vesicle-based mRNA transport through interaction with synaptotagmins. In Rattus norvegicus (Rat), this protein is Heterogeneous nuclear ribonucleoprotein Q (Syncrip).